Reading from the N-terminus, the 127-residue chain is Class I hydrophobin 1 (127 aa).

The signal sequence occupies residues 1 to 20 (MLSLLSKAVSLAILVTAVVA). Intrachain disulfides connect cysteine 53/cysteine 108, cysteine 60/cysteine 102, cysteine 61/cysteine 94, and cysteine 109/cysteine 122. The N-linked (GlcNAc...) asparagine glycan is linked to asparagine 66.

The protein belongs to the fungal hydrophobin family. As to quaternary structure, self-assembles to form functional amyloid fibrils called rodlets. Self-assembly into fibrillar rodlets occurs spontaneously at hydrophobic:hydrophilic interfaces and the rodlets further associate laterally to form amphipathic monolayers. Expressed everywhere in the mycelial tissues of developing fruiting bodies except for the top parts of the pileus (cap) and for the prehymenophore; but high level of the transcript is detected in the parts surrounding the prehymenophore.

The protein resides in the secreted. It localises to the cell wall. Functionally, aerial growth, conidiation, and dispersal of filamentous fungi in the environment rely upon a capability of their secreting small amphipathic proteins called hydrophobins (HPBs) with low sequence identity. Class I can self-assemble into an outermost layer of rodlet bundles on aerial cell surfaces, conferring cellular hydrophobicity that supports fungal growth, development and dispersal; whereas Class II form highly ordered films at water-air interfaces through intermolecular interactions but contribute nothing to the rodlet structure. Hyd1 is a class I hydrophobin that plays a role in fruiting body initiation rather than in mature fruit body maintenance. Seems to be involved in the formation in the extracellular matrix of lined air channels with a hydrophobic membrane. These channels may help to provide gas exchange during respiration in mycelial tissues of developing fruiting bodies and are formed all over the mycelial tissues of these developing fruiting bodies except for the top parts of the pileus (cap) and for the prehymenophore. The sequence is that of Class I hydrophobin 1 from Lentinula edodes (Shiitake mushroom).